Consider the following 161-residue polypeptide: Negative cofactor 2 complex subunit beta (161 aa).

Positions 11–75 constitute a Histone-fold domain; the sequence is SLPKATVQKM…IAAEHIIKAL (65 aa). Residues 93-107 show a composition bias toward basic and acidic residues; sequence EHKEQQKNREKKSSK. 2 disordered regions span residues 93-116 and 130-161; these read EHKE…VSRD and RERF…TKEN. Polar residues predominate over residues 135–147; sequence NQNIAHDNHTTTA.

This sequence belongs to the NC2 beta/DR1 family.

It is found in the cytoplasm. The protein localises to the nucleus. The protein is Negative cofactor 2 complex subunit beta (ncb2) of Schizosaccharomyces pombe (strain 972 / ATCC 24843) (Fission yeast).